Here is a 767-residue protein sequence, read N- to C-terminus: Actin filament-associated protein 1-like 1 (767 aa).

Over residues 83 to 97 (LRDMSDDGERSKEAS) the composition is skewed to basic and acidic residues. Residues 83 to 145 (LRDMSDDGER…KSPEYISSHN (63 aa)) are disordered. Phosphoserine is present on residues Ser87, Ser93, Ser97, Ser103, and Ser152. A compositionally biased stretch (polar residues) spans 164-173 (SYPTTRMNGE). A disordered region spans residues 164 to 210 (SYPTTRMNGESKSSYNDSDAMSSSYESYDEEEEEEKGRQPKHQWPSE). The segment covering 174–189 (SKSSYNDSDAMSSSYE) has biased composition (low complexity). One can recognise a PH 1 domain in the interval 219-315 (DCRICAFLLR…WLKVIREVSR (97 aa)). Ser328 and Ser342 each carry phosphoserine. Residues 341 to 381 (LSQEKQNSDSDSLGMNDSSSTLSRREACEHGKGKKNSLAEL) are disordered. Residues 349-362 (DSDSLGMNDSSSTL) are compositionally biased toward polar residues. The PH 2 domain occupies 417–511 (EAPCCGYLNV…WLGLLLVEMG (95 aa)). Tyr556 is subject to Phosphotyrosine. Residues 563–605 (KVQDEEPQRPTGAQVKRHASSCSEKSHRADPQVKVKRHASSAN) form a disordered region. Basic and acidic residues predominate over residues 586 to 595 (EKSHRADPQV). The stretch at 610 to 700 (GKNRAEEDAR…AVKERLQQSL (91 aa)) forms a coiled coil. The disordered stretch occupies residues 704–767 (PALGLSVSSK…KAKEWEMKKT (64 aa)). Polar residues predominate over residues 709–733 (SVSSKSKSQETTNKPQSSVPEQSLP). Ser746 carries the phosphoserine modification. Over residues 758 to 767 (KAKEWEMKKT) the composition is skewed to basic and acidic residues.

Interacts with CTTN.

It localises to the cytoplasm. Its subcellular location is the cell projection. The protein localises to the podosome. It is found in the invadopodium. Its function is as follows. May be involved in podosome and invadosome formation. The sequence is that of Actin filament-associated protein 1-like 1 (Afap1l1) from Rattus norvegicus (Rat).